Consider the following 282-residue polypeptide: CD320 antigen (282 aa).

A signal peptide spans 1-35; the sequence is MSGGWMAQVGAWRTGALGLALLLLLGLGLGLEAAA. At 36-229 the chain is on the extracellular side; the sequence is SPLSTPTSAQ…GDQSGSPTAY (194 aa). Residues 53-90 enclose the LDL-receptor class A 1 domain; it reads SCPPTKFQCRTSGLCVPLTWRCDRDLDCSDGSDEEECR. 3 cysteine pairs are disulfide-bonded: Cys-54-Cys-67, Cys-61-Cys-80, and Cys-74-Cys-89. Trp-72, Asp-75, Asp-77, Asp-79, Asp-85, and Glu-86 together coordinate Ca(2+). Asn-126 carries an N-linked (GlcNAc...) asparagine glycan. The region spanning 131–168 is the LDL-receptor class A 2 domain; the sequence is ACLAGELRCTLSDDCIPLTWRCDGHPDCPDSSDELGCG. Intrachain disulfides connect Cys-132–Cys-145, Cys-139–Cys-158, and Cys-152–Cys-167. Positions 150, 153, 155, 157, 163, and 164 each coordinate Ca(2+). N-linked (GlcNAc...) asparagine glycosylation is found at Asn-195 and Asn-213. The tract at residues 199–223 is disordered; the sequence is MGPPVTLESVPSVGNATSSSAGDQS. Over residues 210–223 the composition is skewed to polar residues; that stretch reads SVGNATSSSAGDQS. The chain crosses the membrane as a helical span at residues 230 to 250; it reads GVIAAAAVLSASLVTATLLLL. Residues 251–282 are Cytoplasmic-facing; that stretch reads SWLRAQERLRPLGLLVAMKESLLLSEQKTSLP.

As to quaternary structure, interacts (via LDL-receptor class A domains) with TCN2. As to expression, detected in the germinal center (GC) of lymphoid follicles (at protein level). Expressed abundantly on follicular dendritic cells (FDCs).

The protein localises to the cell membrane. Receptor for transcobalamin saturated with cobalamin (TCbl). Plays an important role in cobalamin uptake. Plasma membrane protein that is expressed on follicular dendritic cells (FDC) and mediates interaction with germinal center B cells. Functions as costimulator to promote B cell responses to antigenic stimuli; promotes B cell differentiation and proliferation. Germinal center-B (GC-B) cells differentiate into memory B-cells and plasma cells (PC) through interaction with T-cells and follicular dendritic cells (FDC). CD320 augments the proliferation of PC precursors generated by IL-10. In Homo sapiens (Human), this protein is CD320 antigen (CD320).